We begin with the raw amino-acid sequence, 137 residues long: Phosphoribosyl-AMP cyclohydrolase (137 aa).

Asp84 contributes to the Mg(2+) binding site. Cys85 lines the Zn(2+) pocket. 2 residues coordinate Mg(2+): Asp86 and Asp88. Zn(2+)-binding residues include Cys101 and Cys108.

Belongs to the PRA-CH family. In terms of assembly, homodimer. The cofactor is Mg(2+). Requires Zn(2+) as cofactor.

The protein resides in the cytoplasm. It carries out the reaction 1-(5-phospho-beta-D-ribosyl)-5'-AMP + H2O = 1-(5-phospho-beta-D-ribosyl)-5-[(5-phospho-beta-D-ribosylamino)methylideneamino]imidazole-4-carboxamide. The protein operates within amino-acid biosynthesis; L-histidine biosynthesis; L-histidine from 5-phospho-alpha-D-ribose 1-diphosphate: step 3/9. Its function is as follows. Catalyzes the hydrolysis of the adenine ring of phosphoribosyl-AMP. This chain is Phosphoribosyl-AMP cyclohydrolase, found in Chlorobium phaeovibrioides (strain DSM 265 / 1930) (Prosthecochloris vibrioformis (strain DSM 265)).